A 338-amino-acid chain; its full sequence is Ketol-acid reductoisomerase (NADP(+)) (338 aa).

Residues 1 to 181 enclose the KARI N-terminal Rossmann domain; it reads MQVYYDKDAD…GGGRAGVIET (181 aa). NADP(+) contacts are provided by residues 24–27, R47, S50, S52, and 82–85; these read YGSQ and DEHQ. H107 is a catalytic residue. G133 is an NADP(+) binding site. A KARI C-terminal knotted domain is found at 182–327; it reads SFKDETETDL…AKLRDMMPWI (146 aa). 4 residues coordinate Mg(2+): D190, E194, E226, and E230. S251 contacts substrate.

Belongs to the ketol-acid reductoisomerase family. The cofactor is Mg(2+).

The enzyme catalyses (2R)-2,3-dihydroxy-3-methylbutanoate + NADP(+) = (2S)-2-acetolactate + NADPH + H(+). The catalysed reaction is (2R,3R)-2,3-dihydroxy-3-methylpentanoate + NADP(+) = (S)-2-ethyl-2-hydroxy-3-oxobutanoate + NADPH + H(+). The protein operates within amino-acid biosynthesis; L-isoleucine biosynthesis; L-isoleucine from 2-oxobutanoate: step 2/4. It participates in amino-acid biosynthesis; L-valine biosynthesis; L-valine from pyruvate: step 2/4. In terms of biological role, involved in the biosynthesis of branched-chain amino acids (BCAA). Catalyzes an alkyl-migration followed by a ketol-acid reduction of (S)-2-acetolactate (S2AL) to yield (R)-2,3-dihydroxy-isovalerate. In the isomerase reaction, S2AL is rearranged via a Mg-dependent methyl migration to produce 3-hydroxy-3-methyl-2-ketobutyrate (HMKB). In the reductase reaction, this 2-ketoacid undergoes a metal-dependent reduction by NADPH to yield (R)-2,3-dihydroxy-isovalerate. This is Ketol-acid reductoisomerase (NADP(+)) from Thioalkalivibrio sulfidiphilus (strain HL-EbGR7).